A 326-amino-acid polypeptide reads, in one-letter code: MFPTHRPRRLRSSETLRRMVRETTLTSADFIYPLFAVPGEGVAKEVTSMPGVYQLSIDKIVEEAKEVYDLGIPSIILFGIPTDKDNDATGAWHDCGIVQKAATAVKEAVPELIVAADTCLCEYTPHGHCGYLEVGDLSGRVLNDPTLELLRKTAVSQAKAGADIIAPSGMMDGFVATIRDALDEAGFSDTPIMAYSAKYASAYYGPFRDAAESTPQFGDRRTYQMDPGNSREALKEVELDVAEGADIVMVKPALSYMDIICRIKETTDLPVAAYNVSGEYSMVKAAALNGWIDEERVVLETLTSFKRAGADLILTYHAKDAARWLA.

Cys119, Cys121, and Cys129 together coordinate Zn(2+). Lys198 acts as the Schiff-base intermediate with substrate in catalysis. 2 residues coordinate 5-aminolevulinate: Arg208 and Arg220. A Mg(2+)-binding site is contributed by Glu236. The active-site Schiff-base intermediate with substrate is Lys251. 5-aminolevulinate is bound by residues Ser277 and Tyr316.

The protein belongs to the ALAD family. In terms of assembly, homooctamer. Zn(2+) is required as a cofactor.

It carries out the reaction 2 5-aminolevulinate = porphobilinogen + 2 H2O + H(+). The protein operates within porphyrin-containing compound metabolism; protoporphyrin-IX biosynthesis; coproporphyrinogen-III from 5-aminolevulinate: step 1/4. In terms of biological role, catalyzes an early step in the biosynthesis of tetrapyrroles. Binds two molecules of 5-aminolevulinate per subunit, each at a distinct site, and catalyzes their condensation to form porphobilinogen. This chain is Delta-aminolevulinic acid dehydratase (hemB), found in Synechococcus elongatus (strain ATCC 33912 / PCC 7942 / FACHB-805) (Anacystis nidulans R2).